The chain runs to 417 residues: Serine hydroxymethyltransferase 2 (417 aa).

Residues leucine 121 and 125–127 (GHL) each bind (6S)-5,6,7,8-tetrahydrofolate. Lysine 230 is modified (N6-(pyridoxal phosphate)lysine). 355–357 (SPF) is a (6S)-5,6,7,8-tetrahydrofolate binding site.

Belongs to the SHMT family. As to quaternary structure, homodimer. Requires pyridoxal 5'-phosphate as cofactor.

It localises to the cytoplasm. The catalysed reaction is (6R)-5,10-methylene-5,6,7,8-tetrahydrofolate + glycine + H2O = (6S)-5,6,7,8-tetrahydrofolate + L-serine. Its pathway is one-carbon metabolism; tetrahydrofolate interconversion. It functions in the pathway amino-acid biosynthesis; glycine biosynthesis; glycine from L-serine: step 1/1. In terms of biological role, catalyzes the reversible interconversion of serine and glycine with tetrahydrofolate (THF) serving as the one-carbon carrier. This reaction serves as the major source of one-carbon groups required for the biosynthesis of purines, thymidylate, methionine, and other important biomolecules. Also exhibits THF-independent aldolase activity toward beta-hydroxyamino acids, producing glycine and aldehydes, via a retro-aldol mechanism. The polypeptide is Serine hydroxymethyltransferase 2 (Pseudomonas fluorescens (strain ATCC BAA-477 / NRRL B-23932 / Pf-5)).